The sequence spans 132 residues: ATP synthase epsilon chain (132 aa).

Residues 88 to 102 (IDKERAEAARQRAQE) are compositionally biased toward basic and acidic residues. The tract at residues 88-112 (IDKERAEAARQRAQERLNSQSDDTD) is disordered.

Belongs to the ATPase epsilon chain family. In terms of assembly, F-type ATPases have 2 components, CF(1) - the catalytic core - and CF(0) - the membrane proton channel. CF(1) has five subunits: alpha(3), beta(3), gamma(1), delta(1), epsilon(1). CF(0) has three main subunits: a, b and c. The F(1)F(0) complex interacts with SpoIIIJ and YqjG; YqgA is found in the same complex.

It localises to the cell membrane. Produces ATP from ADP in the presence of a proton gradient across the membrane. The sequence is that of ATP synthase epsilon chain (atpC) from Bacillus subtilis (strain 168).